Here is a 534-residue protein sequence, read N- to C-terminus: Apolipoprotein N-acyltransferase (534 aa).

The next 7 helical transmembrane spans lie at 8–28 (VILV…AFAV), 31–51 (LPPF…VWLI), 69–89 (AFAV…WWLG), 105–125 (LAIL…VALA), 127–147 (IFWS…GLME), 178–198 (VIGA…PALF), and 208–228 (VALA…ALYL). One can recognise a CN hydrolase domain in the interval 246–496 (VQPDIDQAAK…TGFIDATVDS (251 aa)). Catalysis depends on glutamate 291, which acts as the Proton acceptor. Residue lysine 355 is part of the active site. Residue cysteine 408 is the Nucleophile of the active site. Residues 511-531 (FWLTEALLILIALISREGFIF) form a helical membrane-spanning segment.

The protein belongs to the CN hydrolase family. Apolipoprotein N-acyltransferase subfamily.

It localises to the cell inner membrane. It carries out the reaction N-terminal S-1,2-diacyl-sn-glyceryl-L-cysteinyl-[lipoprotein] + a glycerophospholipid = N-acyl-S-1,2-diacyl-sn-glyceryl-L-cysteinyl-[lipoprotein] + a 2-acyl-sn-glycero-3-phospholipid + H(+). Its pathway is protein modification; lipoprotein biosynthesis (N-acyl transfer). In terms of biological role, catalyzes the phospholipid dependent N-acylation of the N-terminal cysteine of apolipoprotein, the last step in lipoprotein maturation. This is Apolipoprotein N-acyltransferase from Rhizobium etli (strain CIAT 652).